A 605-amino-acid polypeptide reads, in one-letter code: DNA primase (605 aa).

A CHC2-type zinc finger spans residues cysteine 39 to cysteine 63. In terms of domain architecture, Toprim spans arginine 257–glycine 338. Mg(2+)-binding residues include glutamate 263, aspartate 307, and aspartate 309.

This sequence belongs to the DnaG primase family. As to quaternary structure, monomer. Interacts with DnaB. The cofactor is Zn(2+). Mg(2+) is required as a cofactor.

The enzyme catalyses ssDNA + n NTP = ssDNA/pppN(pN)n-1 hybrid + (n-1) diphosphate.. In terms of biological role, RNA polymerase that catalyzes the synthesis of short RNA molecules used as primers for DNA polymerase during DNA replication. The chain is DNA primase from Treponema pallidum (strain Nichols).